Reading from the N-terminus, the 211-residue chain is Thiamine-phosphate synthase (211 aa).

4-amino-2-methyl-5-(diphosphooxymethyl)pyrimidine contacts are provided by residues 37–41 (QLRIK) and N69. Positions 70 and 89 each coordinate Mg(2+). S108 contributes to the 4-amino-2-methyl-5-(diphosphooxymethyl)pyrimidine binding site. A 2-[(2R,5Z)-2-carboxy-4-methylthiazol-5(2H)-ylidene]ethyl phosphate-binding site is contributed by 134-136 (TQT). A 4-amino-2-methyl-5-(diphosphooxymethyl)pyrimidine-binding site is contributed by K137. Residues G166 and 186-187 (VS) contribute to the 2-[(2R,5Z)-2-carboxy-4-methylthiazol-5(2H)-ylidene]ethyl phosphate site.

The protein belongs to the thiamine-phosphate synthase family. It depends on Mg(2+) as a cofactor.

The catalysed reaction is 2-[(2R,5Z)-2-carboxy-4-methylthiazol-5(2H)-ylidene]ethyl phosphate + 4-amino-2-methyl-5-(diphosphooxymethyl)pyrimidine + 2 H(+) = thiamine phosphate + CO2 + diphosphate. It carries out the reaction 2-(2-carboxy-4-methylthiazol-5-yl)ethyl phosphate + 4-amino-2-methyl-5-(diphosphooxymethyl)pyrimidine + 2 H(+) = thiamine phosphate + CO2 + diphosphate. It catalyses the reaction 4-methyl-5-(2-phosphooxyethyl)-thiazole + 4-amino-2-methyl-5-(diphosphooxymethyl)pyrimidine + H(+) = thiamine phosphate + diphosphate. The protein operates within cofactor biosynthesis; thiamine diphosphate biosynthesis; thiamine phosphate from 4-amino-2-methyl-5-diphosphomethylpyrimidine and 4-methyl-5-(2-phosphoethyl)-thiazole: step 1/1. In terms of biological role, condenses 4-methyl-5-(beta-hydroxyethyl)thiazole monophosphate (THZ-P) and 2-methyl-4-amino-5-hydroxymethyl pyrimidine pyrophosphate (HMP-PP) to form thiamine monophosphate (TMP). This Salmonella dublin (strain CT_02021853) protein is Thiamine-phosphate synthase.